Reading from the N-terminus, the 85-residue chain is BmK AGP-SYPU2 (85 aa).

Positions 1–19 (MNYMVIISLALLVMTGVES) are cleaved as a signal peptide. In terms of domain architecture, LCN-type CS-alpha/beta spans 21–83 (KDGYIADDRN…ARIMKPGRCN (63 aa)). 4 disulfides stabilise this stretch: Cys-31–Cys-82, Cys-35–Cys-55, Cys-41–Cys-65, and Cys-45–Cys-67.

The protein belongs to the long (4 C-C) scorpion toxin superfamily. Sodium channel inhibitor family. Alpha subfamily. Expressed by the venom gland.

It localises to the secreted. Functionally, alpha toxins bind voltage-independently at site-3 of sodium channels (Nav) and inhibit the inactivation of the activated channels, thereby blocking neuronal transmission. Shows analgesic activity when intraperitoneally injected into mice. This is BmK AGP-SYPU2 from Olivierus martensii (Manchurian scorpion).